The chain runs to 874 residues: Valine--tRNA ligase (874 aa).

The short motif at 42 to 52 is the 'HIGH' region element; that stretch reads PNITGRIHIGH. The 'KMSKS' region signature appears at 522-526; that stretch reads KMSKS. Residue Lys-525 coordinates ATP. The stretch at 806-874 forms a coiled coil; that stretch reads DYIDIDTEKQ…KLQALLKEIS (69 aa).

It belongs to the class-I aminoacyl-tRNA synthetase family. ValS type 1 subfamily. In terms of assembly, monomer.

It is found in the cytoplasm. It catalyses the reaction tRNA(Val) + L-valine + ATP = L-valyl-tRNA(Val) + AMP + diphosphate. Functionally, catalyzes the attachment of valine to tRNA(Val). As ValRS can inadvertently accommodate and process structurally similar amino acids such as threonine, to avoid such errors, it has a 'posttransfer' editing activity that hydrolyzes mischarged Thr-tRNA(Val) in a tRNA-dependent manner. The sequence is that of Valine--tRNA ligase from Petrotoga mobilis (strain DSM 10674 / SJ95).